The chain runs to 443 residues: Probable 26S proteasome regulatory subunit 4 (443 aa).

The disordered stretch occupies residues 1 to 53 (MGQQQSGFGGRGNDRGAGDGEKKEKKKYEAPIPSRIGKKKKGSKGPDAASKLP). The span at 12-29 (GNDRGAGDGEKKEKKKYE) shows a compositional bias: basic and acidic residues. Residue 229 to 236 (GCPGTGKT) participates in ATP binding.

It belongs to the AAA ATPase family.

It localises to the cytoplasm. The protein localises to the nucleus. Its function is as follows. The 26S proteasome is involved in the ATP-dependent degradation of ubiquitinated proteins. The regulatory (or ATPase) complex confers ATP dependency and substrate specificity to the 26S complex. May play a role in the degradation of microtubule severing protein mei-1. This chain is Probable 26S proteasome regulatory subunit 4 (rpt-2), found in Caenorhabditis elegans.